Here is a 215-residue protein sequence, read N- to C-terminus: Sodium channel regulatory subunit beta-3 (215 aa).

Residues 1-24 form the signal peptide; sequence MPAFNRLLPLASLVLIYWVRVCFP. Residues 25–138 form the Ig-like C2-type domain; it reads VCVEVPSETE…EAHRPFVKTT (114 aa). Residues 25 to 156 are Extracellular-facing; it reads VCVEVPSETE…EEAGEDFTSV (132 aa). 2 disulfides stabilise this stretch: C26–C48 and C45–C120. N-linked (GlcNAc...) asparagine glycosylation is found at N95, N109, N113, and N121. Residues 157 to 178 traverse the membrane as a helical segment; that stretch reads VSEIMMYILLVFLTLWLFIEMI. Residues 179-215 lie on the Cytoplasmic side of the membrane; the sequence is YCYRKVSKAEEAAQENASDYLAIPSENKENSVVPVEE.

This sequence belongs to the sodium channel auxiliary subunit SCN3B (TC 8.A.17) family. As to quaternary structure, a voltage-gated sodium (Nav) channel consists of an ion-conducting pore-forming alpha subunit functional on its own that is regulated by one or more beta subunits. Forms homodimers and homotrimers. SCN3B is non-covalently associated with alpha subunits and induces the formation of alpha subunit oligomers, including trimers. Interacts with SCN5A/Nav1.5; regulatory subunit of SCN5A/Nav1.5. Interacts with SCN7A/Nav2.1; probable regulatory subunit of SCN7A/Nav2.1. Interacts with SCN10A; regulatory subunit of SCN10A/Nav1.8. Interacts with NFASC; probably involved in targeting the sodium channels to the nodes of Ranvier. Intramolecular disulfide bonds favor the voltage-gated sodium channel oligomeric complex assembly. In terms of processing, N-glycosylated. Expressed broadly in neurons in the central and peripheral nervous systems, but not in glia and most non-neuronal cells. Weak detection in lung and adrenal gland.

The protein localises to the cell membrane. Its function is as follows. Regulatory subunit of multiple voltage-gated sodium (Nav) channels directly mediating the depolarization of excitable membranes. Navs, also called VGSCs (voltage-gated sodium channels) or VDSCs (voltage-dependent sodium channels), operate by switching between closed and open conformations depending on the voltage difference across the membrane. In the open conformation they allow Na(+) ions to selectively pass through the pore, along their electrochemical gradient. The influx of Na+ ions provokes membrane depolarization, initiating the propagation of electrical signals throughout cells and tissues. The accessory beta subunits participate in localization and functional modulation of the Nav channels. Voltage-gated sodium channels regulatory subunit that modulates channel gating kinetics. Modulates the activity of SCN2A/Nav1.2, causing a hyperpolarizing shift in the voltage-dependence of inactivation and increasing the fraction of channels operating in the fast gating mode. Also able to induce unique persistent SCN2A/Nav1.2-mediated sodium currents. Could modulate the activity of SCN10A/Nav1.8. The sequence is that of Sodium channel regulatory subunit beta-3 from Rattus norvegicus (Rat).